Consider the following 303-residue polypeptide: Tyrosine recombinase XerC (303 aa).

In terms of domain architecture, Core-binding (CB) spans 3 to 89 (IQNDQWVSAF…TLRSFYQFLV (87 aa)). Positions 110-297 (KLPSFLYEEE…TKDRLRDVYR (188 aa)) constitute a Tyr recombinase domain. Residues arginine 150, lysine 174, histidine 249, arginine 252, and histidine 275 contribute to the active site. The active-site O-(3'-phospho-DNA)-tyrosine intermediate is tyrosine 284.

This sequence belongs to the 'phage' integrase family. XerC subfamily. In terms of assembly, forms a cyclic heterotetrameric complex composed of two molecules of XerC and two molecules of XerD.

Its subcellular location is the cytoplasm. Its function is as follows. Site-specific tyrosine recombinase, which acts by catalyzing the cutting and rejoining of the recombining DNA molecules. The XerC-XerD complex is essential to convert dimers of the bacterial chromosome into monomers to permit their segregation at cell division. It also contributes to the segregational stability of plasmids. This is Tyrosine recombinase XerC from Halalkalibacterium halodurans (strain ATCC BAA-125 / DSM 18197 / FERM 7344 / JCM 9153 / C-125) (Bacillus halodurans).